Here is a 910-residue protein sequence, read N- to C-terminus: DnaJ-like protein MG200 homolog (910 aa).

Positions 4–73 (AKRDYYEVLG…RANYDKYGHD (70 aa)) constitute a J domain. Disordered stretches follow at residues 102 to 160 (DNLS…DDIP), 260 to 408 (TEPS…LEQD), and 451 to 486 (VLSD…STAP). The span at 111 to 121 (KKEKTKTKKKG) shows a compositional bias: basic residues. The segment covering 273-283 (DSDAVTAATTV) has biased composition (low complexity). Acidic residues predominate over residues 357-379 (SDEADATNEPTEQDTISEPEQET). The segment covering 451-462 (VLSDQNPNPQTP) has biased composition (polar residues).

The chain is DnaJ-like protein MG200 homolog from Mycoplasma pneumoniae (strain ATCC 29342 / M129 / Subtype 1) (Mycoplasmoides pneumoniae).